Consider the following 349-residue polypeptide: Protein-glutamate methylesterase/protein-glutamine glutaminase (349 aa).

The Response regulatory domain maps to 5 to 122 (RVLSVDDSAL…REGMLAYSEM (118 aa)). 4-aspartylphosphate is present on Asp56. A CheB-type methylesterase domain is found at 152–344 (LLSSEKLIAI…QQMLAKISAG (193 aa)). Catalysis depends on residues Ser164, His190, and Asp286.

This sequence belongs to the CheB family. Phosphorylated by CheA. Phosphorylation of the N-terminal regulatory domain activates the methylesterase activity.

Its subcellular location is the cytoplasm. The catalysed reaction is [protein]-L-glutamate 5-O-methyl ester + H2O = L-glutamyl-[protein] + methanol + H(+). It catalyses the reaction L-glutaminyl-[protein] + H2O = L-glutamyl-[protein] + NH4(+). Functionally, involved in chemotaxis. Part of a chemotaxis signal transduction system that modulates chemotaxis in response to various stimuli. Catalyzes the demethylation of specific methylglutamate residues introduced into the chemoreceptors (methyl-accepting chemotaxis proteins or MCP) by CheR. Also mediates the irreversible deamidation of specific glutamine residues to glutamic acid. The sequence is that of Protein-glutamate methylesterase/protein-glutamine glutaminase from Salmonella choleraesuis (strain SC-B67).